We begin with the raw amino-acid sequence, 236 residues long: Small ribosomal subunit protein uS2c (236 aa).

It belongs to the universal ribosomal protein uS2 family.

It localises to the plastid. The protein localises to the chloroplast. In Lemna minor (Common duckweed), this protein is Small ribosomal subunit protein uS2c (rps2).